A 2009-amino-acid chain; its full sequence is Rootletin (2009 aa).

2 coiled-coil regions span residues 74 to 265 (EMAS…VTSD) and 346 to 438 (ASLH…LRLQ). Disordered stretches follow at residues 462–519 (ALSD…CSDS), 575–594 (RDQT…EAQR), 636–665 (ELKR…LERS), 1180–1225 (EAQR…ELRS), and 1448–1501 (GRVS…EAVR). Residues 463 to 484 (LSDTESGVQLSSSERTADTSDG) are compositionally biased toward polar residues. 2 coiled-coil regions span residues 550–1058 (LGSV…LLAE) and 1091–1439 (LEME…GLRS). Positions 577–586 (QTAASAQAQE) are enriched in low complexity. Positions 656–665 (ARARRELERS) are enriched in basic and acidic residues. A phosphoserine mark is found at serine 1453, serine 1463, and serine 1469. Tyrosine 1475 is subject to Phosphotyrosine. 5 positions are modified to phosphoserine: serine 1476, serine 1479, serine 1483, serine 1489, and serine 1568. Residues 1479-1494 (SQPPSPGLIASPAPPD) show a composition bias toward pro residues. Coiled coils occupy residues 1498–1697 (EAVR…GTLQ) and 1744–1998 (HLQK…RSSA). A disordered region spans residues 1957–2009 (QVQTERTLEARERAHRQRVSGLEEQVSTLKAQLHQELRRSSASVSLPPGTPEK).

It belongs to the rootletin family. As to quaternary structure, homomer. Interacts with KLC3, NEK2 and the N-terminus of CEP250. Interacts with CEP44. Phosphorylated by NEK2 which may regulate its association with centrosomes. In terms of tissue distribution, highest expression detected in photoreceptor cells of retina. Expressed at lower levels in brain, trachea and kidney. Detected in all major ciliated epithelia. During embryonic development, enriched along the apical domains of neuroepithelium in brain ventricular zone, in primordia of retinal pigment epithelia and in neural retina.

It localises to the cytoplasm. The protein resides in the cytoskeleton. The protein localises to the microtubule organizing center. It is found in the centrosome. Its subcellular location is the centriole. It localises to the cilium basal body. Its function is as follows. Major structural component of the ciliary rootlet, a cytoskeletal-like structure in ciliated cells which originates from the basal body at the proximal end of a cilium and extends proximally toward the cell nucleus. Furthermore, is required for the correct positioning of the cilium basal body relative to the cell nucleus, to allow for ciliogenesis. Contributes to centrosome cohesion before mitosis. The sequence is that of Rootletin from Mus musculus (Mouse).